The following is a 201-amino-acid chain: Large ribosomal subunit protein uL18 (201 aa).

This sequence belongs to the universal ribosomal protein uL18 family. As to quaternary structure, part of the 50S ribosomal subunit. Contacts the 5S and 23S rRNAs.

Its function is as follows. This is one of the proteins that bind and probably mediate the attachment of the 5S RNA into the large ribosomal subunit, where it forms part of the central protuberance. The sequence is that of Large ribosomal subunit protein uL18 from Thermococcus gammatolerans (strain DSM 15229 / JCM 11827 / EJ3).